A 267-amino-acid polypeptide reads, in one-letter code: MATSARRAYGFGRADEATHPDSIRATLAEFLSTFVFVFAGEGSILALDKLYWDTAAHTGTNTPGGLVLVALAHALALFAAVSAAINVSGGHVNPAVTFAALIGGRISVIRAIYYWVAQLIGAILACLLLRLATNGLRPVGFHVASGVSELHGLLMEIILTFALVYVVYSTAIDPKRGSIGIIAPLAIGLIVGANILVGGPFDGASMNPARAFGPALVGWRWSNHWIYWVGPFIGGALAALIYEYMIIPSVNEPPHHSTHQPLAPEDY.

Met-1 carries the N-acetylmethionine modification. N-acetylalanine; in Probable aquaporin TIP3-2, N-terminally processed is present on Ala-2. The Cytoplasmic segment spans residues 2–26 (ATSARRAYGFGRADEATHPDSIRAT). A helical transmembrane segment spans residues 27–47 (LAEFLSTFVFVFAGEGSILAL). Over 48–66 (DKLYWDTAAHTGTNTPGGL) the chain is Vacuolar. Residues 67–87 (VLVALAHALALFAAVSAAINV) form a helical membrane-spanning segment. The Cytoplasmic segment spans residues 88–110 (SGGHVNPAVTFAALIGGRISVIR). Residues 93 to 95 (NPA) carry the NPA 1 motif. A helical membrane pass occupies residues 111 to 131 (AIYYWVAQLIGAILACLLLRL). At 132 to 151 (ATNGLRPVGFHVASGVSELH) the chain is on the vacuolar side. A helical transmembrane segment spans residues 152-172 (GLLMEIILTFALVYVVYSTAI). Over 173–178 (DPKRGS) the chain is Cytoplasmic. A helical membrane pass occupies residues 179 to 199 (IGIIAPLAIGLIVGANILVGG). The Vacuolar segment spans residues 200–226 (PFDGASMNPARAFGPALVGWRWSNHWI). The NPA 2 motif lies at 207–209 (NPA). The chain crosses the membrane as a helical span at residues 227-247 (YWVGPFIGGALAALIYEYMII). Over 248 to 267 (PSVNEPPHHSTHQPLAPEDY) the chain is Cytoplasmic.

This sequence belongs to the MIP/aquaporin (TC 1.A.8) family. TIP (TC 1.A.8.10) subfamily. Predominantly expressed in developing seeds. Also expressed in rosette leaves.

The protein localises to the vacuole membrane. In terms of biological role, aquaporins facilitate the transport of water and small neutral solutes across cell membranes. In Arabidopsis thaliana (Mouse-ear cress), this protein is Probable aquaporin TIP3-2 (TIP3-2).